The chain runs to 508 residues: Photosystem II CP47 reaction center protein (508 aa).

6 consecutive transmembrane segments (helical) span residues 21–36 (SVHI…WAGS), 101–115 (IVFS…IWHW), 140–156 (GIHL…FGAF), 203–218 (IAAG…FHLS), 237–252 (VLSS…AFVV), and 457–472 (TFAL…HGAR).

Belongs to the PsbB/PsbC family. PsbB subfamily. In terms of assembly, PSII is composed of 1 copy each of membrane proteins PsbA, PsbB, PsbC, PsbD, PsbE, PsbF, PsbH, PsbI, PsbJ, PsbK, PsbL, PsbM, PsbT, PsbX, PsbY, PsbZ, Psb30/Ycf12, at least 3 peripheral proteins of the oxygen-evolving complex and a large number of cofactors. It forms dimeric complexes. Binds multiple chlorophylls. PSII binds additional chlorophylls, carotenoids and specific lipids. is required as a cofactor.

It localises to the plastid. The protein localises to the chloroplast thylakoid membrane. Functionally, one of the components of the core complex of photosystem II (PSII). It binds chlorophyll and helps catalyze the primary light-induced photochemical processes of PSII. PSII is a light-driven water:plastoquinone oxidoreductase, using light energy to abstract electrons from H(2)O, generating O(2) and a proton gradient subsequently used for ATP formation. The chain is Photosystem II CP47 reaction center protein from Calycanthus floridus var. glaucus (Eastern sweetshrub).